Consider the following 377-residue polypeptide: Homoserine O-acetyltransferase (377 aa).

The region spanning 47–355 is the AB hydrolase-1 domain; that stretch reads NAILICHALT…DYGHDAFLLE (309 aa). Catalysis depends on Ser-153, which acts as the Nucleophile. Arg-222 contributes to the substrate binding site. Active-site residues include Asp-316 and His-349. Position 350 (Asp-350) interacts with substrate.

This sequence belongs to the AB hydrolase superfamily. MetX family. In terms of assembly, homodimer.

Its subcellular location is the cytoplasm. It catalyses the reaction L-homoserine + acetyl-CoA = O-acetyl-L-homoserine + CoA. It functions in the pathway amino-acid biosynthesis; L-methionine biosynthesis via de novo pathway; O-acetyl-L-homoserine from L-homoserine: step 1/1. Transfers an acetyl group from acetyl-CoA to L-homoserine, forming acetyl-L-homoserine. This is Homoserine O-acetyltransferase from Deferribacter desulfuricans (strain DSM 14783 / JCM 11476 / NBRC 101012 / SSM1).